The sequence spans 295 residues: MTHLFEGVGVALTTPFTNNKVNLEALKAHVNFLLENNAQAIIVNGTTAESPTLTTDEKERILKTVIDLVDKRVPVIAGTGTNDTEKSIQASFQAKALGADAIMLITPYYNKTNQRGLVKHFEAITDAVKLPVVLYNVPSRTNMTIEPETVEILSQHPYIVALKDATNDFEYLEEVKKRIDTNSFALYSGNDDNVVEYYQRGGQGVISVIANVIPKEFQALYDAQQSGLDIQDQFKPIGTLLSALSVDINPIPIKALTSYLEFGNYELRLPLVSLEDTDTKVLREAYDTFKAGENE.

Thr-47 provides a ligand contact to pyruvate. Tyr-135 functions as the Proton donor/acceptor in the catalytic mechanism. Lys-163 serves as the catalytic Schiff-base intermediate with substrate. Ile-206 serves as a coordination point for pyruvate.

This sequence belongs to the DapA family. Homodimer.

It localises to the cytoplasm. It carries out the reaction L-aspartate 4-semialdehyde + pyruvate = (2S,4S)-4-hydroxy-2,3,4,5-tetrahydrodipicolinate + H2O + H(+). It functions in the pathway amino-acid biosynthesis; L-lysine biosynthesis via DAP pathway; (S)-tetrahydrodipicolinate from L-aspartate: step 3/4. In terms of biological role, catalyzes the condensation of (S)-aspartate-beta-semialdehyde [(S)-ASA] and pyruvate to 4-hydroxy-tetrahydrodipicolinate (HTPA). In Staphylococcus aureus (strain Mu50 / ATCC 700699), this protein is 4-hydroxy-tetrahydrodipicolinate synthase.